The sequence spans 393 residues: Probable acetyl-CoA acyltransferase (393 aa).

Cys-88 (acyl-thioester intermediate) is an active-site residue. Residues His-349 and Cys-378 each act as proton acceptor in the active site.

Belongs to the thiolase-like superfamily. Thiolase family.

The protein localises to the cytoplasm. The catalysed reaction is 2 acetyl-CoA = acetoacetyl-CoA + CoA. This is Probable acetyl-CoA acyltransferase from Staphylococcus aureus (strain Mu50 / ATCC 700699).